We begin with the raw amino-acid sequence, 293 residues long: Shikimate kinase (293 aa).

87-97 (PLAGGLKSSSA) lines the ATP pocket.

This sequence belongs to the GHMP kinase family. Archaeal shikimate kinase subfamily.

Its subcellular location is the cytoplasm. It catalyses the reaction shikimate + ATP = 3-phosphoshikimate + ADP + H(+). Its pathway is metabolic intermediate biosynthesis; chorismate biosynthesis; chorismate from D-erythrose 4-phosphate and phosphoenolpyruvate: step 5/7. The sequence is that of Shikimate kinase from Methanosarcina mazei (strain ATCC BAA-159 / DSM 3647 / Goe1 / Go1 / JCM 11833 / OCM 88) (Methanosarcina frisia).